Consider the following 556-residue polypeptide: Formate--tetrahydrofolate ligase (556 aa).

65–72 (TPAGEGKS) contacts ATP.

Belongs to the formate--tetrahydrofolate ligase family.

The enzyme catalyses (6S)-5,6,7,8-tetrahydrofolate + formate + ATP = (6R)-10-formyltetrahydrofolate + ADP + phosphate. It functions in the pathway one-carbon metabolism; tetrahydrofolate interconversion. This is Formate--tetrahydrofolate ligase from Clostridium perfringens (strain 13 / Type A).